A 499-amino-acid polypeptide reads, in one-letter code: Multiphosphoryl transfer protein (499 aa).

One can recognise a PTS EIIA type-2 domain in the interval 2 to 142 (LELSESNIHL…AEFCAILMGE (141 aa)). His62 serves as the catalytic Tele-phosphohistidine intermediate; for EIIA activity. Position 62 is a phosphohistidine; by HPr (His62). Positions 155-285 (SLDVNTQSLL…SDVETQSVEG (131 aa)) are m domain. The region spanning 286 to 376 (AVVGTFTIRN…KAIANGLGEN (91 aa)) is the HPr 1 domain. His300 functions as the Pros-phosphohistidine intermediate; for HPr 1 activity in the catalytic mechanism. The residue at position 300 (His300) is a Phosphohistidine. The tract at residues 378 to 409 (SAVPPSEPDTIEIMGDQIHTPAVTEDDNLPAN) is linker. The region spanning 410-499 (AIEAVFVIKN…GAVIESGLGE (90 aa)) is the HPr 2 domain. A Phosphohistidine modification is found at His424. His424 acts as the Pros-phosphohistidine intermediate; for HPr 2 activity in catalysis.

Its subcellular location is the cytoplasm. Its function is as follows. The phosphoenolpyruvate-dependent sugar phosphotransferase system (sugar PTS), a major carbohydrate active transport system, catalyzes the phosphorylation of incoming sugar substrates concomitantly with their translocation across the cell membrane. The enzyme II FruAB PTS system is involved in fructose transport. The polypeptide is Multiphosphoryl transfer protein (fruB) (Haemophilus influenzae (strain ATCC 51907 / DSM 11121 / KW20 / Rd)).